We begin with the raw amino-acid sequence, 192 residues long: Immunity protein YqcF (192 aa).

Probably interacts with cognate toxin YqcG but not with other non-cognate toxins. The interaction inhibits the toxic activity of YqcG.

It is found in the cytoplasm. Its function is as follows. Immunity component of one of 6 LXG toxin-immunity modules in this strain. They promote kin selection, mediate competition in biofilms, and drive spatial segregation of different strains, indicating that LXG toxins may help avoid warfare between strains in biofilms. Mediates intercellular competition during biofilm formation; disruption of the operon disadvantages the bacteria, but overexpression of the cognate immunity protein restores growth in competition with wild-type. In situ neutralizes the toxic effect of cognate toxin YqcG. Neutralizes the toxic activity of cognate toxin YqcG upon expression in E.coli. Does not have immunity protein activity on other LXG toxins. This is Immunity protein YqcF (yqcF) from Bacillus subtilis (strain 168).